Here is a 122-residue protein sequence, read N- to C-terminus: Phospholipase A2 crotoxin basic subunit CBd (122 aa).

Disulfide bonds link C26–C115, C28–C44, C43–C95, C49–C122, C50–C88, C57–C81, and C75–C86. Residues Y27, G29, and G31 each contribute to the Ca(2+) site. H47 is an active-site residue. D48 contacts Ca(2+). The active site involves D89.

This sequence belongs to the phospholipase A2 family. Group II subfamily. D49 sub-subfamily. In terms of assembly, heterodimer of one of the acidic (CA1, CA2, CA3 or CA4) and one of the basic (CBa1, CBa2, CBb, CBc or CBd) subunits; non-covalently linked. The acidic subunit is non-toxic, without enzymatic activity and comprises 3 peptides that are cross-linked by 5 disulfide bridges. The basic subunit is toxic, has phospholipase A2 activity and is composed of a single chain. Multiple variants of each subunit give different crotoxin complexes that can be subdivided into 2 classes: (1) those of high toxicity, low PLA2 activity (CBb, CBc and CBd linked with high affinity to any CA) and high stability (K(d)=4.5 nM) and (2) those of moderate toxicity, high PLA2 activity (CBa2 linked with low affinity to any CA) and low stability (K(d)=25 nM). Interacts with crotoxin inhibitor from Crotalus serum (CICS); the interaction leads to dissociation of the CA-CB heterodimer and to inhibition of PLA2 activity of the CB subunit. Interacts with human NBD1 domain of CFTR. The cofactor is Ca(2+). Expressed by the venom gland.

The protein resides in the secreted. It catalyses the reaction a 1,2-diacyl-sn-glycero-3-phosphocholine + H2O = a 1-acyl-sn-glycero-3-phosphocholine + a fatty acid + H(+). Functionally, heterodimer CA-CB: Crotoxin is a potent presynaptic neurotoxin that possesses phospholipase A2 (PLA2) activity and exerts a lethal action by blocking neuromuscular transmission. It consists of a non-covalent association of a basic and weakly toxic PLA2 subunit (CBa2, CBb, CBc, or CBd), with a small acidic, non-enzymatic and non-toxic subunit (CA1, CA2, CA3 or CA4). The complex acts by binding to a specific 48-kDa protein (R48) receptor located on presynaptic membranes, forming a transient ternary complex CA-CB-R48, followed by dissociation of the CA-CB complex and release of the CA subunit. At equilibrium, only the CB subunits remain associated with the specific crotoxin receptor. In addition to neurotoxicity, crotoxin has been found to exert myotoxicity, nephrotoxicity, and cardiovascular toxicity. Moreover, anti-inflammatory, immunomodulatory, anti-tumor and analgesic effects of crotoxin have also been reported. In terms of biological role, monomer CBd: The basic subunit of crotoxin is a snake venom phospholipase A2 (PLA2) that exhibits weak neurotoxicity (10-fold less than the heterodimer) and very strong anticoagulant effects by binding to factor Xa (F10) and inhibiting the prothrombinase activity. In addition, it shows the same effects described for the heterodimer and binds the nucleotide-binding domain (NBD1) of CFTR chloride channels and increases the channel current. PLA2 catalyzes the calcium-dependent hydrolysis of the 2-acyl groups in 3-sn-phosphoglycerides. The protein is Phospholipase A2 crotoxin basic subunit CBd of Crotalus durissus terrificus (South American rattlesnake).